Reading from the N-terminus, the 118-residue chain is Small ribosomal subunit protein uS13 (118 aa).

The tract at residues 92 to 118 is disordered; that stretch reads RRGLPVRGQRTKTNARTRKGPRKPIKK.

The protein belongs to the universal ribosomal protein uS13 family. Part of the 30S ribosomal subunit. Forms a loose heterodimer with protein S19. Forms two bridges to the 50S subunit in the 70S ribosome.

In terms of biological role, located at the top of the head of the 30S subunit, it contacts several helices of the 16S rRNA. In the 70S ribosome it contacts the 23S rRNA (bridge B1a) and protein L5 of the 50S subunit (bridge B1b), connecting the 2 subunits; these bridges are implicated in subunit movement. Contacts the tRNAs in the A and P-sites. In Pectobacterium carotovorum subsp. carotovorum (strain PC1), this protein is Small ribosomal subunit protein uS13.